A 469-amino-acid polypeptide reads, in one-letter code: Arginine biosynthesis bifunctional protein ArgJ, mitochondrial (469 aa).

Residues T199, K228, T239, E325, N464, and T469 each coordinate substrate. T239 serves as the catalytic Nucleophile.

The protein belongs to the ArgJ family. In terms of assembly, heterodimer of an alpha and a beta chain. Post-translationally, the alpha and beta chains are autoproteolytically processed from a single precursor protein within the mitochondrion.

It localises to the mitochondrion matrix. It catalyses the reaction N(2)-acetyl-L-ornithine + L-glutamate = N-acetyl-L-glutamate + L-ornithine. The enzyme catalyses L-glutamate + acetyl-CoA = N-acetyl-L-glutamate + CoA + H(+). It participates in amino-acid biosynthesis; L-arginine biosynthesis; L-ornithine and N-acetyl-L-glutamate from L-glutamate and N(2)-acetyl-L-ornithine (cyclic): step 1/1. Its pathway is amino-acid biosynthesis; L-arginine biosynthesis; N(2)-acetyl-L-ornithine from L-glutamate: step 1/4. Catalyzes two activities which are involved in the cyclic version of arginine biosynthesis: the synthesis of acetylglutamate from glutamate and acetyl-CoA, and of ornithine by transacetylation between acetylornithine and glutamate. The protein is Arginine biosynthesis bifunctional protein ArgJ, mitochondrial of Neurospora crassa (strain ATCC 24698 / 74-OR23-1A / CBS 708.71 / DSM 1257 / FGSC 987).